Consider the following 531-residue polypeptide: rRNA methyltransferase 1, mitochondrial (531 aa).

The N-terminal 40 residues, 1–40, are a transit peptide targeting the mitochondrion; the sequence is MISIFKILSSPKPATTTTNIINPINIINGIRYFSSNQEDY. 2 disordered regions span residues 70–141 and 230–277; these read ESHY…RTEY and IEDE…KKTT. Residues 74-136 are compositionally biased toward low complexity; it reads NNNNNSNNNS…NNFRNNNNNN (63 aa). Acidic residues predominate over residues 247-267; the sequence is EQNEYEEEQEEEKVQEEEEDN.

The protein belongs to the class IV-like SAM-binding methyltransferase superfamily. RNA methyltransferase TrmH family.

The protein localises to the mitochondrion. It carries out the reaction a uridine in rRNA + S-adenosyl-L-methionine = a 2'-O-methyluridine in rRNA + S-adenosyl-L-homocysteine + H(+). Its function is as follows. S-adenosyl-L-methionine-dependent 2'-O-ribose methyltransferase that catalyzes the formation of a 2'-O-methylguanosine in the mitochondrial large subunit ribosomal RNA (mtLSU rRNA), a universally conserved modification in the peptidyl transferase domain of the mtLSU rRNA. The polypeptide is rRNA methyltransferase 1, mitochondrial (mrm1) (Dictyostelium discoideum (Social amoeba)).